A 195-amino-acid chain; its full sequence is U8 snoRNA-decapping enzyme (195 aa).

Residues 18–168 (GWRHACHALL…LENTFIGNAR (151 aa)) enclose the Nudix hydrolase domain. Substrate-binding residues include H24, R50, and F57. 4 residues coordinate Mn(2+): G59, E76, E80, and H99. The Nudix box motif lies at 61-82 (FVDLRDGSLEDGLNRELGEELG). Substrate-binding residues include N166 and Q170. E173 lines the Mn(2+) pocket.

This sequence belongs to the Nudix hydrolase family. NUDT16 subfamily. As to quaternary structure, homodimer. It depends on Mg(2+) as a cofactor. The cofactor is Mn(2+). Co(2+) is required as a cofactor.

It is found in the nucleus. The protein resides in the nucleolus. It localises to the nucleoplasm. The protein localises to the cytoplasm. It catalyses the reaction a 5'-end (N(7)-methyl 5'-triphosphoguanosine)-ribonucleoside in mRNA + H2O = N(7)-methyl-GDP + a 5'-end phospho-ribonucleoside in mRNA + 2 H(+). It carries out the reaction IDP + H2O = IMP + phosphate + H(+). The enzyme catalyses dIDP + H2O = dIMP + phosphate + H(+). The catalysed reaction is a 5'-end NAD(+)-phospho-ribonucleoside in mRNA + H2O = a 5'-end phospho-ribonucleoside in mRNA + NAD(+) + H(+). It catalyses the reaction a 5'-end FAD-phospho-ribonucleoside in mRNA + H2O = a 5'-end phospho-adenosine-phospho-ribonucleoside in mRNA + FMN + 2 H(+). It carries out the reaction a 5'-end CoA-ribonucleoside in mRNA + H2O = a 5'-end phospho-adenosine-phospho-ribonucleoside in mRNA + (R)-4'-phosphopantetheine + 2 H(+). RNA-binding and decapping enzyme that catalyzes the cleavage of the cap structure of snoRNAs and mRNAs in a metal-dependent manner. Part of the U8 snoRNP complex that is required for the accumulation of mature 5.8S and 28S rRNA. Has diphosphatase activity and removes m7G and/or m227G caps from U8 snoRNA and leaves a 5'monophosphate on the RNA. Also catalyzes the cleavage of the cap structure on mRNAs. Does not hydrolyze cap analog structures like 7-methylguanosine nucleoside triphosphate (m7GpppG). Also hydrolysis m7G- and m227G U3-capped RNAs but with less efficiencies. Has broad substrate specificity with manganese or cobalt as cofactor and can act on various RNA species. Binds to the U8 snoRNA; metal is not required for RNA-binding. May play a role in the regulation of snoRNAs and mRNAs degradation. Also acts as a phosphatase; hydrolyzes the non-canonical purine nucleotides inosine diphosphate (IDP) and deoxyinosine diphosphate (dITP) as well as guanosine diphosphate (GDP), deoxyguanosine diphosphate (dGDP), xanthine diphosphate (XDP), inosine triphosphate (ITP) and deoxyinosine triphosphate (ITP) to their respective monophosphate derivatives and does not distinguish between the deoxy- and ribose forms. The order of activity with different substrates is IDP &gt; dIDP &gt;&gt; GDP = dGDP &gt; XDP = ITP = dITP. Binds strongly to GTP, ITP and XTP. Participates in the hydrolysis of dIDP/IDP and probably excludes non-canonical purines from RNA and DNA precursor pools, thus preventing their incorporation into RNA and DNA and avoiding chromosomal lesions. Exhibits decapping activity towards NAD-capped RNAs and FAD-capped RNAs. Exhibits decapping activity towards dpCoA-capped RNAs in vitro. This is U8 snoRNA-decapping enzyme (NUDT16) from Bos taurus (Bovine).